The chain runs to 420 residues: Protein phosphatase methylesterase 1 (420 aa).

Composition is skewed to low complexity over residues 18 to 28 (PEAPLLSESSS) and 42 to 51 (SSVSSTGTVI). Residues 18-51 (PEAPLLSESSSMNHPAESSHDEDSSSVSSTGTVI) form a disordered region. Residues serine 197, aspartate 223, and histidine 354 contribute to the active site.

It belongs to the AB hydrolase superfamily.

The catalysed reaction is [phosphatase 2A protein]-C-terminal L-leucine methyl ester + H2O = [phosphatase 2A protein]-C-terminal L-leucine + methanol + H(+). In terms of biological role, demethylates proteins that have been reversibly carboxymethylated. Demethylates the phosphatase PP2A catalytic subunit. The polypeptide is Protein phosphatase methylesterase 1 (ppe1) (Aspergillus fumigatus (strain ATCC MYA-4609 / CBS 101355 / FGSC A1100 / Af293) (Neosartorya fumigata)).